The primary structure comprises 217 residues: Adenylate kinase (217 aa).

10 to 15 serves as a coordination point for ATP; it reads GAGKGT. The NMP stretch occupies residues 30–59; sequence STGDMFRAAMKEETQLGLEAKSFIDKGELV. AMP is bound by residues threonine 31, arginine 36, 57 to 59, 85 to 88, and glutamine 92; these read ELV and GFPR. The interval 126–163 is LID; it reads GRRICKNCGATYHLVFNPPAKENVCDKCGGELYQRADD. Residue arginine 127 coordinates ATP. Zn(2+)-binding residues include cysteine 130 and cysteine 133. 136–137 contributes to the ATP binding site; that stretch reads TY. Cysteine 150 and cysteine 153 together coordinate Zn(2+). Residues arginine 160 and arginine 171 each coordinate AMP. Residue lysine 199 coordinates ATP.

It belongs to the adenylate kinase family. In terms of assembly, monomer.

It is found in the cytoplasm. The catalysed reaction is AMP + ATP = 2 ADP. The protein operates within purine metabolism; AMP biosynthesis via salvage pathway; AMP from ADP: step 1/1. In terms of biological role, catalyzes the reversible transfer of the terminal phosphate group between ATP and AMP. Plays an important role in cellular energy homeostasis and in adenine nucleotide metabolism. This is Adenylate kinase from Bacillus pumilus (strain SAFR-032).